A 114-amino-acid polypeptide reads, in one-letter code: UPF0339 protein PM0519 (114 aa).

2 consecutive repeat copies span residues 11 to 59 (AKDG…NFEV) and 62 to 110 (AKND…IKDL).

Belongs to the UPF0339 family. Duplicated subfamily.

The chain is UPF0339 protein PM0519 from Pasteurella multocida (strain Pm70).